A 212-amino-acid chain; its full sequence is MKKVLMTGFEPFGGESINPALEAVKRLDGKKLDGGEVMICQVPVTRYESIDTVVNAIEQYQPDIVITVGQAAGRAAITPERVAINVDDFRIPDNGGHQPIDEPVILDGPDAYFTTLPIKAITSALHKASIPCQVSNTAGTFVCNHLFYGIQHYLRDKSVRHGFVHIPLLPEQDASGNQPTMSLDLIVEGLALLAQAVIDNESDVAITAGQIC.

Catalysis depends on residues glutamate 80, cysteine 143, and histidine 165.

This sequence belongs to the peptidase C15 family. As to quaternary structure, homotetramer.

It localises to the cytoplasm. The catalysed reaction is Release of an N-terminal pyroglutamyl group from a polypeptide, the second amino acid generally not being Pro.. Removes 5-oxoproline from various penultimate amino acid residues except L-proline. The polypeptide is Pyrrolidone-carboxylate peptidase (Vibrio campbellii (strain ATCC BAA-1116)).